Here is a 64-residue protein sequence, read N- to C-terminus: MLCLPVFIILLLLASPAAPNPLQTRIQSNLIRAGPEDANIKTDKRIFAGLLASILKPIIDAAKG.

Positions 1–19 (MLCLPVFIILLLLASPAAP) are cleaved as a signal peptide. Residues 20–43 (NPLQTRIQSNLIRAGPEDANIKTD) constitute a propeptide that is removed on maturation. Position 63 is a lysine amide (K63).

The protein belongs to the conotoxin T superfamily. Expressed by the venom duct.

It is found in the secreted. The protein is Conotoxin VnMLCL-05 of Conus ventricosus (Mediterranean cone).